The following is a 173-amino-acid chain: Alpha-crystallin A chain (173 aa).

Met-1 is subject to N-acetylmethionine. A required for complex formation with BFSP1 and BFSP2 region spans residues 1–63 (MDIAIQHPWF…RTVLDSGISE (63 aa)). Deamidated glutamine; partial is present on Gln-6. A Phosphoserine modification is found at Ser-45. Gln-50 bears the Deamidated glutamine; partial mark. Residues 52–162 (LFRTVLDSGI…GHSERAIPVS (111 aa)) form the sHSP domain. Residues Lys-70 and Lys-99 each carry the N6-acetyllysine modification. His-100 serves as a coordination point for Zn(2+). Position 101 is a deamidated asparagine; partial (Asn-101). Residues Glu-102 and His-107 each coordinate Zn(2+). Ser-122 is modified (phosphoserine). At Asn-123 the chain carries Deamidated asparagine; partial. The disordered stretch occupies residues 144–173 (PKVPSGVDAGHSERAIPVSREEKPSSAPSS). Positions 153–167 (GHSERAIPVSREEKP) are enriched in basic and acidic residues. A Zn(2+)-binding site is contributed by His-154. O-linked (GlcNAc) serine glycosylation occurs at Ser-162.

It belongs to the small heat shock protein (HSP20) family. In terms of assembly, heteromer composed of three CRYAA and one CRYAB subunits. Inter-subunit bridging via zinc ions enhances stability, which is crucial as there is no protein turn over in the lens. Can also form homodimers and homotetramers (dimers of dimers) which serve as the building blocks of homooligomers. Within homooligomers, the zinc-binding motif is created from residues of 3 different molecules. His-100 and Glu-102 from one molecule are ligands of the zinc ion, and His-107 and His-154 residues from additional molecules complete the site with tetrahedral coordination geometry. Part of a complex required for lens intermediate filament formation composed of BFSP1, BFSP2 and CRYAA. Post-translationally, acetylation at Lys-70 may increase chaperone activity. In terms of processing, undergoes age-dependent proteolytical cleavage at the C-terminus.

Its subcellular location is the cytoplasm. It is found in the nucleus. Contributes to the transparency and refractive index of the lens. Acts as a chaperone, preventing aggregation of various proteins under a wide range of stress conditions. Required for the correct formation of lens intermediate filaments as part of a complex composed of BFSP1, BFSP2 and CRYAA. This Canis lupus familiaris (Dog) protein is Alpha-crystallin A chain (CRYAA).